A 247-amino-acid polypeptide reads, in one-letter code: Phycocyanobilin:ferredoxin oxidoreductase (247 aa).

The protein belongs to the HY2 family.

The enzyme catalyses (2R,3Z)-phycocyanobilin + 4 oxidized [2Fe-2S]-[ferredoxin] = biliverdin IXalpha + 4 reduced [2Fe-2S]-[ferredoxin] + 4 H(+). Functionally, catalyzes the four-electron reduction of biliverdin IX-alpha (2-electron reduction at both the A and D rings); the reaction proceeds via an isolatable 2-electron intermediate, 181,182-dihydrobiliverdin. This Synechococcus sp. (strain CC9605) protein is Phycocyanobilin:ferredoxin oxidoreductase.